Reading from the N-terminus, the 155-residue chain is Ribosome maturation factor RimP (155 aa).

The protein belongs to the RimP family.

The protein resides in the cytoplasm. In terms of biological role, required for maturation of 30S ribosomal subunits. The protein is Ribosome maturation factor RimP of Prochlorococcus marinus (strain AS9601).